The chain runs to 69 residues: Pantinin-1 (69 aa).

The first 23 residues, Met-1–Gly-23, serve as a signal peptide directing secretion. A Valine amide modification is found at Val-37. Residues Gly-41–Lys-69 constitute a propeptide that is removed on maturation.

Belongs to the non-disulfide-bridged peptide (NDBP) superfamily. Short antimicrobial peptide (group 4) family. As to expression, expressed by the venom gland.

The protein localises to the secreted. Its subcellular location is the target cell membrane. Its function is as follows. Amphipathic peptide that possesses relatively strong activities against Gram-positive bacteria and a fungus, but has very weak antimicrobial activities against Gram-negative bacteria. Also exhibits very low hemolytic activities against human erythrocytes (64 uM induce 21% of hemolysis). Minimal inhibitory concentration (MIC) are the following: 8 uM against S.aureus, 32 uM against B.magaterium, 32 uM against M.luteus, 28 uM against vancomycin-resistant Enterococci, 14 uM against methicillin-resistant S.aureus, 62 uM against E.coli, &gt;87 uM against P.putida, &gt;87 uM against K.oxytoca, 76 uM against E.cloacae, 72 uM against S.enterica and 16 uM against the fungus C.tropicalis. This is Pantinin-1 from Pandinus imperator (Emperor scorpion).